The sequence spans 122 residues: Co-chaperonin GroES (122 aa).

This sequence belongs to the GroES chaperonin family. Heptamer of 7 subunits arranged in a ring. Interacts with the chaperonin GroEL.

The protein localises to the cytoplasm. Its function is as follows. Together with the chaperonin GroEL, plays an essential role in assisting protein folding. The GroEL-GroES system forms a nano-cage that allows encapsulation of the non-native substrate proteins and provides a physical environment optimized to promote and accelerate protein folding. GroES binds to the apical surface of the GroEL ring, thereby capping the opening of the GroEL channel. The sequence is that of Co-chaperonin GroES from Aquifex aeolicus (strain VF5).